The primary structure comprises 365 residues: Phospho-N-acetylmuramoyl-pentapeptide-transferase (365 aa).

The next 10 membrane-spanning stretches (helical) occupy residues 22-42 (YISV…LALG), 74-94 (TMGG…WGNL), 95-115 (TSIY…IGFF), 134-154 (KFAL…YLLS), 168-188 (SLYI…IING), 201-221 (GLAI…AYIE), 240-260 (LAEV…FLWF), 267-287 (VFMG…IAVM), 292-312 (LIFF…MLQV), and 342-362 (KVVI…FAAI).

It belongs to the glycosyltransferase 4 family. MraY subfamily. The cofactor is Mg(2+).

It localises to the cell inner membrane. The enzyme catalyses UDP-N-acetyl-alpha-D-muramoyl-L-alanyl-gamma-D-glutamyl-meso-2,6-diaminopimeloyl-D-alanyl-D-alanine + di-trans,octa-cis-undecaprenyl phosphate = di-trans,octa-cis-undecaprenyl diphospho-N-acetyl-alpha-D-muramoyl-L-alanyl-D-glutamyl-meso-2,6-diaminopimeloyl-D-alanyl-D-alanine + UMP. Its pathway is cell wall biogenesis; peptidoglycan biosynthesis. Its function is as follows. Catalyzes the initial step of the lipid cycle reactions in the biosynthesis of the cell wall peptidoglycan: transfers peptidoglycan precursor phospho-MurNAc-pentapeptide from UDP-MurNAc-pentapeptide onto the lipid carrier undecaprenyl phosphate, yielding undecaprenyl-pyrophosphoryl-MurNAc-pentapeptide, known as lipid I. The protein is Phospho-N-acetylmuramoyl-pentapeptide-transferase of Francisella tularensis subsp. holarctica (strain OSU18).